The chain runs to 390 residues: Leu/Ile/Val-binding protein homolog 6 (390 aa).

The signal sequence occupies residues 1-21; the sequence is MKKIALTALAVFSLAASAAYA.

This sequence belongs to the leucine-binding protein family.

Functionally, component of an amino-acid transport system. In Brucella melitensis biotype 1 (strain ATCC 23456 / CCUG 17765 / NCTC 10094 / 16M), this protein is Leu/Ile/Val-binding protein homolog 6.